We begin with the raw amino-acid sequence, 278 residues long: Ribosomal RNA small subunit methyltransferase J (278 aa).

Residues 143 to 144 (ER) and D197 contribute to the S-adenosyl-L-methionine site.

The protein belongs to the methyltransferase superfamily. RsmJ family.

It localises to the cytoplasm. It catalyses the reaction guanosine(1516) in 16S rRNA + S-adenosyl-L-methionine = N(2)-methylguanosine(1516) in 16S rRNA + S-adenosyl-L-homocysteine + H(+). Specifically methylates the guanosine in position 1516 of 16S rRNA. The chain is Ribosomal RNA small subunit methyltransferase J from Marinobacter nauticus (strain ATCC 700491 / DSM 11845 / VT8) (Marinobacter aquaeolei).